Here is a 468-residue protein sequence, read N- to C-terminus: ATP synthase subunit beta (468 aa).

Gly155 to Thr162 contacts ATP.

The protein belongs to the ATPase alpha/beta chains family. In terms of assembly, F-type ATPases have 2 components, CF(1) - the catalytic core - and CF(0) - the membrane proton channel. CF(1) has five subunits: alpha(3), beta(3), gamma(1), delta(1), epsilon(1). CF(0) has three main subunits: a(1), b(2) and c(9-12). The alpha and beta chains form an alternating ring which encloses part of the gamma chain. CF(1) is attached to CF(0) by a central stalk formed by the gamma and epsilon chains, while a peripheral stalk is formed by the delta and b chains.

Its subcellular location is the cell membrane. It catalyses the reaction ATP + H2O + 4 H(+)(in) = ADP + phosphate + 5 H(+)(out). Functionally, produces ATP from ADP in the presence of a proton gradient across the membrane. The catalytic sites are hosted primarily by the beta subunits. This Streptococcus pneumoniae (strain Taiwan19F-14) protein is ATP synthase subunit beta.